The primary structure comprises 426 residues: Serine/threonine-protein kinase ssn3 (426 aa).

The region spanning 41–368 (YHIVGFISSG…AQEALEHPYF (328 aa)) is the Protein kinase domain. Residues 47-55 (ISSGTYGRV) and K71 contribute to the ATP site. Catalysis depends on D173, which acts as the Proton acceptor. The tract at residues 390–426 (RVTQDDNDIRSGSLPGTKRSGLPDDSLMGRAAKRLKE) is disordered.

It belongs to the protein kinase superfamily. CMGC Ser/Thr protein kinase family. CDC2/CDKX subfamily. As to quaternary structure, component of the srb8-11 complex, a regulatory module of the Mediator complex. It depends on Mg(2+) as a cofactor.

It is found in the nucleus. It catalyses the reaction L-seryl-[protein] + ATP = O-phospho-L-seryl-[protein] + ADP + H(+). The catalysed reaction is L-threonyl-[protein] + ATP = O-phospho-L-threonyl-[protein] + ADP + H(+). The enzyme catalyses [DNA-directed RNA polymerase] + ATP = phospho-[DNA-directed RNA polymerase] + ADP + H(+). Functionally, component of the srb8-11 complex. The srb8-11 complex is a regulatory module of the Mediator complex which is itself involved in regulation of basal and activated RNA polymerase II-dependent transcription. The srb8-11 complex may be involved in the transcriptional repression of a subset of genes regulated by Mediator. It may inhibit the association of the Mediator complex with RNA polymerase II to form the holoenzyme complex. The srb8-11 complex phosphorylates the C-terminal domain (CTD) of the largest subunit of RNA polymerase II. This chain is Serine/threonine-protein kinase ssn3 (ssn3), found in Aspergillus clavatus (strain ATCC 1007 / CBS 513.65 / DSM 816 / NCTC 3887 / NRRL 1 / QM 1276 / 107).